The chain runs to 94 residues: MGETLPQQLPNMNAVSQIIAQQKLAAIMEQVCSDHVPTIITRDTQPSVVMISLEDYQSLEETAYLLRSPNNAQKLMSAIKQLENDQGVERELLE.

The protein belongs to the phD/YefM antitoxin family.

This is an uncharacterized protein from Synechocystis sp. (strain ATCC 27184 / PCC 6803 / Kazusa).